The following is a 390-amino-acid chain: MTNTKKSKQKNTVGNKVKKTNTNKNNNNNNNNNNKNKQNKINNKNNKNNKNNDSNNKNNNTNNKNNINIKNKNLKKVENNKSLKVISSNKNKNILNNLKKEEKVNSNDILIQQQQNREKEDITNEDDDEKYNLWNPKPTSSVSVSSSKSSKSLKTTDLQNEMSEKLKGSRFRWLNETLYTTHSKEAFKEFSEDRSLFDQYHSGFKSQVESWPINPLDLIIDDLSSIKQRKRIADLGCGEAKLAERLQHKHTIQSFDLVAVNERVTACDISNLPLKNESIDIAVFCLSLMGTNFIDFIIEAERVLVKGGLLKIAEIESRITDINAFTNEIQQHGFNLIKKNEQNQYFTLFEFSKLQKKDQQFMRSLKQYQKLKKQQATNEPVLKPCLYKKR.

Disordered stretches follow at residues 1 to 85 (MTNT…SLKV) and 106 to 160 (SNDI…DLQN). 2 stretches are compositionally biased toward low complexity: residues 22-71 (TNKN…NIKN) and 140-152 (SSVS…SSKS). Histidine 201, glycine 236, aspartate 256, aspartate 268, and cysteine 285 together coordinate S-adenosyl-L-methionine.

The protein belongs to the methyltransferase superfamily. RRP8 family.

It localises to the nucleus. Its subcellular location is the nucleolus. In terms of biological role, probable methyltransferase required to silence rDNA. The sequence is that of Ribosomal RNA-processing protein 8 (rrp8) from Dictyostelium discoideum (Social amoeba).